We begin with the raw amino-acid sequence, 226 residues long: Lysoplasmalogenase TMEM86B (226 aa).

Residues 1-23 (MDPGKEGLPRKPRFSAQQLHVGK) lie on the Cytoplasmic side of the membrane. The helical transmembrane segment at 24-40 (WLSPFFFTCAVYFLLWI) threads the bilayer. Over 41-46 (PDDQPS) the chain is Extracellular. A helical membrane pass occupies residues 47-64 (WVGALVKCLPVLSLVVFL). Residues 65-76 (RAVDAGGGYSAR) are Cytoplasmic-facing. A helical membrane pass occupies residues 77–93 (LQGALLCSAVGDACLVW). Residues 94–99 (PEAFLH) are Extracellular-facing. The chain crosses the membrane as a helical span at residues 100–117 (GVAAFAAAHLLYLWAFGL). The Cytoplasmic portion of the chain corresponds to 118-123 (TPLQPG). A helical membrane pass occupies residues 124-140 (LLLLVILAALPYYGLLL). Topologically, residues 141 to 146 (WHLPPD) are extracellular. Residues 147–163 (LVLALTAYSLALATMLW) form a helical membrane-spanning segment. The Cytoplasmic portion of the chain corresponds to 164 to 171 (RGLARGGS). A helical membrane pass occupies residues 172–188 (TGWGALLFTLSDTTLAW). At 189 to 199 (NAFAQPLPHAR) the chain is on the extracellular side. Residues 200–217 (LVVMTTYYSAQVLISLSV) form a helical membrane-spanning segment. The Cytoplasmic segment spans residues 218-226 (SQSPKLKPN).

This sequence belongs to the TMEM86 family. In terms of assembly, homodimer.

The protein resides in the endoplasmic reticulum membrane. The protein localises to the cytoplasm. The catalysed reaction is a 1-O-(1Z-alkenyl)-sn-glycero-3-phosphocholine + H2O = a 2,3-saturated aldehyde + sn-glycerol 3-phosphocholine. It carries out the reaction a 1-O-(1Z-alkenyl)-sn-glycero-3-phosphoethanolamine + H2O = a 2,3-saturated aldehyde + sn-glycero-3-phosphoethanolamine. With respect to regulation, competitively inhibited by lysophosphatidic acid. Functionally, catalyzes the hydrolysis of the vinyl ether bond of choline or ethanolamine lysoplasmalogens, forming fatty aldehyde and glycerophosphocholine or glycerophosphoethanolamine, respectively and is specific for the sn-2-deacylated (lyso) form of plasmalogen. The protein is Lysoplasmalogenase TMEM86B (TMEM86B) of Sus scrofa (Pig).